Reading from the N-terminus, the 235-residue chain is uncharacterized protein (235 aa).

This is an uncharacterized protein from Escherichia coli (strain K12).